We begin with the raw amino-acid sequence, 428 residues long: Serine--tRNA ligase (428 aa).

236–238 serves as a coordination point for L-serine; that stretch reads TAE. 267-269 contributes to the ATP binding site; sequence RSE. Position 290 (Glu290) interacts with L-serine. 354–357 is a binding site for ATP; it reads EISS. Ser388 provides a ligand contact to L-serine.

This sequence belongs to the class-II aminoacyl-tRNA synthetase family. Type-1 seryl-tRNA synthetase subfamily. As to quaternary structure, homodimer. The tRNA molecule binds across the dimer.

Its subcellular location is the cytoplasm. It catalyses the reaction tRNA(Ser) + L-serine + ATP = L-seryl-tRNA(Ser) + AMP + diphosphate + H(+). The enzyme catalyses tRNA(Sec) + L-serine + ATP = L-seryl-tRNA(Sec) + AMP + diphosphate + H(+). It functions in the pathway aminoacyl-tRNA biosynthesis; selenocysteinyl-tRNA(Sec) biosynthesis; L-seryl-tRNA(Sec) from L-serine and tRNA(Sec): step 1/1. In terms of biological role, catalyzes the attachment of serine to tRNA(Ser). Is also able to aminoacylate tRNA(Sec) with serine, to form the misacylated tRNA L-seryl-tRNA(Sec), which will be further converted into selenocysteinyl-tRNA(Sec). In Psychrobacter sp. (strain PRwf-1), this protein is Serine--tRNA ligase.